The primary structure comprises 540 residues: Chaperonin GroEL (540 aa).

Residues 29–32, 86–90, glycine 413, and aspartate 495 contribute to the ATP site; these read TLGP and DGTTT.

It belongs to the chaperonin (HSP60) family. Forms a cylinder of 14 subunits composed of two heptameric rings stacked back-to-back. Interacts with the co-chaperonin GroES.

The protein localises to the cytoplasm. The catalysed reaction is ATP + H2O + a folded polypeptide = ADP + phosphate + an unfolded polypeptide.. Its function is as follows. Together with its co-chaperonin GroES, plays an essential role in assisting protein folding. The GroEL-GroES system forms a nano-cage that allows encapsulation of the non-native substrate proteins and provides a physical environment optimized to promote and accelerate protein folding. This chain is Chaperonin GroEL, found in Caldanaerobacter subterraneus subsp. tengcongensis (strain DSM 15242 / JCM 11007 / NBRC 100824 / MB4) (Thermoanaerobacter tengcongensis).